Consider the following 138-residue polypeptide: Molluscan insulin-related peptide 5 (138 aa).

An N-terminal signal peptide occupies residues 1–31 (MAGVRLVFTKAFMVTVLLTLLLNIGVKPAEG). Glutamine 32 carries the pyrrolidone carboxylic acid modification. Cystine bridges form between cysteine 48–cysteine 124, cysteine 60–cysteine 137, and cysteine 123–cysteine 128. Residues 72 to 84 (DAETGWLLPETMV) constitute a propeptide, C-beta peptide like. Residues 87–111 (NAQTDLDDPLRNIKLSSESALTYLT) constitute a propeptide, C-alpha peptide like. Glutamine 114 carries the pyrrolidone carboxylic acid modification.

The protein belongs to the insulin family. Heterodimer of a B chain and an A chain linked by two disulfide bonds. Expressed in the cerebral light-green cells which are giant neuroendocrines cells involved in the control of growth.

The protein resides in the cytoplasmic vesicle. It localises to the secretory vesicle. This Lymnaea stagnalis (Great pond snail) protein is Molluscan insulin-related peptide 5.